Reading from the N-terminus, the 396-residue chain is Chorismate synthase (396 aa).

Positions 40 and 46 each coordinate NADP(+). FMN-binding positions include 134 to 136 (RSS), 257 to 258 (QA), G302, 317 to 321 (KPIPS), and R343.

It belongs to the chorismate synthase family. In terms of assembly, homotetramer. Requires FMNH2 as cofactor.

It carries out the reaction 5-O-(1-carboxyvinyl)-3-phosphoshikimate = chorismate + phosphate. The protein operates within metabolic intermediate biosynthesis; chorismate biosynthesis; chorismate from D-erythrose 4-phosphate and phosphoenolpyruvate: step 7/7. Its function is as follows. Catalyzes the anti-1,4-elimination of the C-3 phosphate and the C-6 proR hydrogen from 5-enolpyruvylshikimate-3-phosphate (EPSP) to yield chorismate, which is the branch point compound that serves as the starting substrate for the three terminal pathways of aromatic amino acid biosynthesis. This reaction introduces a second double bond into the aromatic ring system. The polypeptide is Chorismate synthase (Bifidobacterium animalis subsp. lactis (strain AD011)).